Reading from the N-terminus, the 490-residue chain is MERWWFNSMLFKKEFERRCGLNKSMGSLGPIENTSEDPNLKMKNIHSCSNVDYLFGVKDIWNFISDDTFLVSDRNGDSYSIYFDIENQIFEVDNDHSFLSELESSFSSYRNSSYLNNGFRGEDPYYNSYMSYMYDTQYSWNNHINSCIDNYLQSQICIDTSIISGSESYGDSYIYRAICSGESLNSSENEGSSRRTRTKGSDLTIRESSNDLEVTQKYKHLWVQCENCYGLNYKKFLKSKMNICEQCGYHLKMSSSDRIELLIDPGTWDPMDEDMVSLDPIEFHSEEEPYKDRIDSYQRKTGLTEAVQTGIGQLNGIPVAIGVMDFQFMGGSMGSVVGEKITRLIEHAANQNLPLIIVCASGGARMQEGSLSLMQMAKISSALYDYQLNKKLFYVSILTSPTTGGVTASFGMLGDIIIAEPNAYIAFAGKRVIEQTLNKTVPEGSQAAEYLFQKGLFDLIVPRNLLKSVLSELFKLHAFFPLNQKSSKIK.

Residues 184–203 (LNSSENEGSSRRTRTKGSDL) form a disordered region. In terms of domain architecture, CoA carboxyltransferase N-terminal spans 221–490 (LWVQCENCYG…PLNQKSSKIK (270 aa)). Zn(2+) is bound by residues Cys-225, Cys-228, Cys-244, and Cys-247. Residues 225–247 (CENCYGLNYKKFLKSKMNICEQC) form a C4-type zinc finger.

This sequence belongs to the AccD/PCCB family. As to quaternary structure, acetyl-CoA carboxylase is a heterohexamer composed of biotin carboxyl carrier protein, biotin carboxylase and 2 subunits each of ACCase subunit alpha and ACCase plastid-coded subunit beta (accD). The cofactor is Zn(2+). As to expression, RNA expressed in leaf, root, stem, and tuber; the least expression occurs in stems. RNA persists even in senescent leaves.

The protein resides in the plastid. It localises to the chloroplast stroma. It catalyses the reaction N(6)-carboxybiotinyl-L-lysyl-[protein] + acetyl-CoA = N(6)-biotinyl-L-lysyl-[protein] + malonyl-CoA. It functions in the pathway lipid metabolism; malonyl-CoA biosynthesis; malonyl-CoA from acetyl-CoA: step 1/1. Its function is as follows. Component of the acetyl coenzyme A carboxylase (ACC) complex. Biotin carboxylase (BC) catalyzes the carboxylation of biotin on its carrier protein (BCCP) and then the CO(2) group is transferred by the transcarboxylase to acetyl-CoA to form malonyl-CoA. The polypeptide is Acetyl-coenzyme A carboxylase carboxyl transferase subunit beta, chloroplastic (Solanum tuberosum (Potato)).